A 189-amino-acid polypeptide reads, in one-letter code: Elongation factor P (189 aa).

It belongs to the elongation factor P family.

It localises to the cytoplasm. It functions in the pathway protein biosynthesis; polypeptide chain elongation. In terms of biological role, involved in peptide bond synthesis. Stimulates efficient translation and peptide-bond synthesis on native or reconstituted 70S ribosomes in vitro. Probably functions indirectly by altering the affinity of the ribosome for aminoacyl-tRNA, thus increasing their reactivity as acceptors for peptidyl transferase. The chain is Elongation factor P from Phytoplasma australiense.